The chain runs to 915 residues: Probable serine/threonine-protein kinase dyrk2 (915 aa).

Low complexity-rich tracts occupy residues Thr-51 to Ser-79, Ser-108 to Ile-119, Ser-170 to Ser-185, and Ser-196 to Ser-218. 3 disordered regions span residues Thr-51–Ile-119, Phe-132–Ser-334, and Ala-349–Ser-533. The segment covering Pro-234 to Phe-260 has biased composition (polar residues). Composition is skewed to low complexity over residues Ser-261–Ser-287, Ser-300–Ser-333, Ser-352–Val-364, Ser-379–Ser-391, Ser-399–Ile-425, and Ser-433–Ser-533. Residues Phe-605 to Ile-902 form the Protein kinase domain. Residues Leu-611–Val-619 and Lys-634 contribute to the ATP site. The active-site Proton acceptor is the Asp-731.

It belongs to the protein kinase superfamily. CMGC Ser/Thr protein kinase family. MNB/DYRK subfamily.

It carries out the reaction L-seryl-[protein] + ATP = O-phospho-L-seryl-[protein] + ADP + H(+). The enzyme catalyses L-threonyl-[protein] + ATP = O-phospho-L-threonyl-[protein] + ADP + H(+). It catalyses the reaction L-tyrosyl-[protein] + ATP = O-phospho-L-tyrosyl-[protein] + ADP + H(+). The polypeptide is Probable serine/threonine-protein kinase dyrk2 (dyrk2) (Dictyostelium discoideum (Social amoeba)).